The primary structure comprises 70 residues: Acyl carrier protein (70 aa).

The 69-residue stretch at 2 to 70 (SDIADRVKKI…ETIQTFGDAP (69 aa)) folds into the Carrier domain. Ser-37 is modified (O-(pantetheine 4'-phosphoryl)serine).

The protein belongs to the acyl carrier protein (ACP) family. 4'-phosphopantetheine is transferred from CoA to a specific serine of apo-ACP by AcpS. This modification is essential for activity because fatty acids are bound in thioester linkage to the sulfhydryl of the prosthetic group.

It localises to the cytoplasm. The protein operates within lipid metabolism; fatty acid biosynthesis. Functionally, carrier of the growing fatty acid chain in fatty acid biosynthesis. The protein is Acyl carrier protein of Cereibacter sphaeroides (Rhodobacter sphaeroides).